Reading from the N-terminus, the 71-residue chain is ATP synthase F(0) complex subunit e, mitochondrial (71 aa).

Lysine 34 carries the post-translational modification N6-acetyllysine. Serine 68 carries the post-translational modification Phosphoserine.

This sequence belongs to the ATPase e subunit family. Component of the ATP synthase complex composed at least of ATP5F1A/subunit alpha, ATP5F1B/subunit beta, ATP5MC1/subunit c (homooctomer), MT-ATP6/subunit a, MT-ATP8/subunit 8, ATP5ME/subunit e, ATP5MF/subunit f, ATP5MG/subunit g, ATP5MK/subunit k, ATP5MJ/subunit j, ATP5F1C/subunit gamma, ATP5F1D/subunit delta, ATP5F1E/subunit epsilon, ATP5PF/subunit F6, ATP5PB/subunit b, ATP5PD/subunit d, ATP5PO/subunit OSCP. ATP synthase complex consists of a soluble F(1) head domain (subunits alpha(3) and beta(3)) - the catalytic core - and a membrane F(0) domain - the membrane proton channel (subunits c, a, 8, e, f, g, k and j). These two domains are linked by a central stalk (subunits gamma, delta, and epsilon) rotating inside the F1 region and a stationary peripheral stalk (subunits F6, b, d, and OSCP).

The protein localises to the mitochondrion. It is found in the mitochondrion inner membrane. Functionally, subunit e, of the mitochondrial membrane ATP synthase complex (F(1)F(0) ATP synthase or Complex V) that produces ATP from ADP in the presence of a proton gradient across the membrane which is generated by electron transport complexes of the respiratory chain. ATP synthase complex consist of a soluble F(1) head domain - the catalytic core - and a membrane F(1) domain - the membrane proton channel. These two domains are linked by a central stalk rotating inside the F(1) region and a stationary peripheral stalk. During catalysis, ATP synthesis in the catalytic domain of F(1) is coupled via a rotary mechanism of the central stalk subunits to proton translocation. In vivo, can only synthesize ATP although its ATP hydrolase activity can be activated artificially in vitro. Part of the complex F(0) domain. This chain is ATP synthase F(0) complex subunit e, mitochondrial, found in Sus scrofa (Pig).